Reading from the N-terminus, the 129-residue chain is Small ribosomal subunit protein uS11 (129 aa).

This sequence belongs to the universal ribosomal protein uS11 family. As to quaternary structure, part of the 30S ribosomal subunit. Interacts with proteins S7 and S18. Binds to IF-3.

Its function is as follows. Located on the platform of the 30S subunit, it bridges several disparate RNA helices of the 16S rRNA. Forms part of the Shine-Dalgarno cleft in the 70S ribosome. The chain is Small ribosomal subunit protein uS11 from Stenotrophomonas maltophilia (strain R551-3).